A 228-amino-acid polypeptide reads, in one-letter code: Uracil-DNA glycosylase (228 aa).

The Proton acceptor role is filled by Asp-64.

It belongs to the uracil-DNA glycosylase (UDG) superfamily. UNG family.

The protein resides in the cytoplasm. It carries out the reaction Hydrolyzes single-stranded DNA or mismatched double-stranded DNA and polynucleotides, releasing free uracil.. Excises uracil residues from the DNA which can arise as a result of misincorporation of dUMP residues by DNA polymerase or due to deamination of cytosine. The protein is Uracil-DNA glycosylase of Pectobacterium carotovorum subsp. carotovorum (strain PC1).